The primary structure comprises 844 residues: DNA mismatch repair protein MutS (844 aa).

610–617 (GPNMGGKS) provides a ligand contact to ATP.

This sequence belongs to the DNA mismatch repair MutS family.

Functionally, this protein is involved in the repair of mismatches in DNA. It is possible that it carries out the mismatch recognition step. This protein has a weak ATPase activity. The protein is DNA mismatch repair protein MutS of Francisella tularensis subsp. novicida (strain U112).